The sequence spans 88 residues: Small ribosomal subunit protein uS19 (88 aa).

The protein belongs to the universal ribosomal protein uS19 family.

In terms of biological role, protein S19 forms a complex with S13 that binds strongly to the 16S ribosomal RNA. The sequence is that of Small ribosomal subunit protein uS19 (rpsS) from Chlamydia pneumoniae (Chlamydophila pneumoniae).